We begin with the raw amino-acid sequence, 3020 residues long: Protein furry homolog (3020 aa).

Tyr213 bears the Phosphotyrosine mark. Disordered stretches follow at residues 1378–1404, 1529–1554, and 1746–1773; these read GSSPSSPEDEVKDREGEVTASHGLKGN, ASGTTSSSNTVVAGQDSFPDPEESKI, and SSPVPDSGLNSSSTSSSISLGGSSGNLP. Phosphoserine is present on residues Ser1382 and Ser1383. Over residues 1752–1772 the composition is skewed to low complexity; the sequence is SGLNSSSTSSSISLGGSSGNL. 2 positions are modified to phosphoserine: Ser1936 and Ser1940. The segment covering 1937–1956 has biased composition (low complexity); it reads RSSSPDLSSSSKLTASRKST. Disordered stretches follow at residues 1937 to 2042 and 2355 to 2384; these read RSSS…PSHV and LQNSSGRDGKPRAMAVTRSASSTSSGSNSN. Residues 1966 to 1976 show a composition bias toward gly residues; that stretch reads PGSGGGGGGSG. Residues 2016–2042 are compositionally biased toward polar residues; sequence ACTQQGLSSKTRSNSSLKESLTDPSHV. The span at 2369–2384 shows a compositional bias: low complexity; that stretch reads AVTRSASSTSSGSNSN. 2 positions are modified to phosphoserine: Ser2427 and Ser2428. The tract at residues 2439–2458 is disordered; the sequence is TSLVSSEDGPREQENMDDTN. Phosphoserine is present on Ser2495. The disordered stretch occupies residues 2508–2535; sequence EERQLSRSTPSLNKMSHEDSDESSEEDL. Residue Thr2516 is modified to Phosphothreonine; by CDK1. A compositionally biased stretch (acidic residues) spans 2526-2535; it reads DSDESSEEDL. Ser2815 is subject to Phosphoserine.

Belongs to the furry protein family. As to quaternary structure, when phosphorylated by CDK1, interacts with PLK1; this interaction occurs in mitotic cells, but not in interphase cells, and leads to further FRY phosphorylation by PLK1. Phosphorylated by AURKA, CDK1 and PLK1.

Its subcellular location is the cytoplasm. It is found in the cytoskeleton. The protein localises to the microtubule organizing center. It localises to the centrosome. The protein resides in the spindle pole. Its function is as follows. Plays a crucial role in the structural integrity of mitotic centrosomes and in the maintenance of spindle bipolarity by promoting PLK1 activity at the spindle poles in early mitosis. May function as a scaffold promoting the interaction between AURKA and PLK1, thereby enhancing AURKA-mediated PLK1 phosphorylation. The sequence is that of Protein furry homolog (Fry) from Mus musculus (Mouse).